A 310-amino-acid polypeptide reads, in one-letter code: uncharacterized protein (310 aa).

This is an uncharacterized protein from Archaeoglobus fulgidus (strain ATCC 49558 / DSM 4304 / JCM 9628 / NBRC 100126 / VC-16).